A 545-amino-acid polypeptide reads, in one-letter code: Chaperonin GroEL (545 aa).

ATP is bound by residues 30–33 (TMGP), lysine 51, 87–91 (DGTTT), glycine 415, and aspartate 494.

It belongs to the chaperonin (HSP60) family. As to quaternary structure, forms a cylinder of 14 subunits composed of two heptameric rings stacked back-to-back. Interacts with the co-chaperonin GroES.

The protein resides in the cytoplasm. The catalysed reaction is ATP + H2O + a folded polypeptide = ADP + phosphate + an unfolded polypeptide.. In terms of biological role, together with its co-chaperonin GroES, plays an essential role in assisting protein folding. The GroEL-GroES system forms a nano-cage that allows encapsulation of the non-native substrate proteins and provides a physical environment optimized to promote and accelerate protein folding. In Helicobacter hepaticus (strain ATCC 51449 / 3B1), this protein is Chaperonin GroEL.